The following is a 117-amino-acid chain: Small ribosomal subunit protein bS16 (117 aa).

Residues 81 to 90 show a composition bias toward basic residues; sequence LKKRPNRNNP. Positions 81–117 are disordered; sequence LKKRPNRNNPHKGQPGKKAQERISAAKQVAEAESAPV.

Belongs to the bacterial ribosomal protein bS16 family.

This chain is Small ribosomal subunit protein bS16, found in Bartonella quintana (strain Toulouse) (Rochalimaea quintana).